A 124-amino-acid polypeptide reads, in one-letter code: MNALGRHILAEIYGCDSNILDNLELIEDIMVQSAIVTGAEIREVAFHKFNPQGVSGVVVISESHITIHTWPELGYAAVDVFTCGDDVNPWDACNYIAKMLRAQNMTATEVKRGVFEKPVKVVNY.

Serine 63 serves as the catalytic Schiff-base intermediate with substrate; via pyruvic acid. Serine 63 is modified (pyruvic acid (Ser); by autocatalysis). Catalysis depends on histidine 68, which acts as the Proton acceptor; for processing activity. Cysteine 83 serves as the catalytic Proton donor; for catalytic activity.

It belongs to the prokaryotic AdoMetDC family. Type 1 subfamily. Heterotetramer of two alpha and two beta chains arranged as a dimer of alpha/beta heterodimers. It depends on pyruvate as a cofactor. Post-translationally, is synthesized initially as an inactive proenzyme. Formation of the active enzyme involves a self-maturation process in which the active site pyruvoyl group is generated from an internal serine residue via an autocatalytic post-translational modification. Two non-identical subunits are generated from the proenzyme in this reaction, and the pyruvate is formed at the N-terminus of the alpha chain, which is derived from the carboxyl end of the proenzyme. The post-translation cleavage follows an unusual pathway, termed non-hydrolytic serinolysis, in which the side chain hydroxyl group of the serine supplies its oxygen atom to form the C-terminus of the beta chain, while the remainder of the serine residue undergoes an oxidative deamination to produce ammonia and the pyruvoyl group blocking the N-terminus of the alpha chain.

The enzyme catalyses S-adenosyl-L-methionine + H(+) = S-adenosyl 3-(methylsulfanyl)propylamine + CO2. The protein operates within amine and polyamine biosynthesis; S-adenosylmethioninamine biosynthesis; S-adenosylmethioninamine from S-adenosyl-L-methionine: step 1/1. Functionally, catalyzes the decarboxylation of S-adenosylmethionine to S-adenosylmethioninamine (dcAdoMet), the propylamine donor required for the synthesis of the polyamines spermine and spermidine from the diamine putrescine. The chain is S-adenosylmethionine decarboxylase proenzyme from Thermoanaerobacter pseudethanolicus (strain ATCC 33223 / 39E) (Clostridium thermohydrosulfuricum).